The sequence spans 177 residues: Large ribosomal subunit protein uL6 (177 aa).

The protein belongs to the universal ribosomal protein uL6 family. Part of the 50S ribosomal subunit.

In terms of biological role, this protein binds to the 23S rRNA, and is important in its secondary structure. It is located near the subunit interface in the base of the L7/L12 stalk, and near the tRNA binding site of the peptidyltransferase center. The sequence is that of Large ribosomal subunit protein uL6 from Rubrobacter xylanophilus (strain DSM 9941 / JCM 11954 / NBRC 16129 / PRD-1).